The chain runs to 214 residues: tRNA (guanine-N(7)-)-methyltransferase (214 aa).

S-adenosyl-L-methionine-binding residues include Glu43, Glu68, Asp95, and Asp117. Asp117 is an active-site residue. Substrate-binding positions include Lys121, Asp153, and 190–193 (TEYE).

The protein belongs to the class I-like SAM-binding methyltransferase superfamily. TrmB family.

It catalyses the reaction guanosine(46) in tRNA + S-adenosyl-L-methionine = N(7)-methylguanosine(46) in tRNA + S-adenosyl-L-homocysteine. It participates in tRNA modification; N(7)-methylguanine-tRNA biosynthesis. Its function is as follows. Catalyzes the formation of N(7)-methylguanine at position 46 (m7G46) in tRNA. The protein is tRNA (guanine-N(7)-)-methyltransferase of Staphylococcus aureus (strain JH1).